Reading from the N-terminus, the 117-residue chain is Crustacean hyperglycemic hormones 3 (117 aa).

Positions 1–24 (MVTPRMLSALSAVLLLVLTASSSA) are cleaved as a signal peptide. Disulfide bonds link C50–C86, C66–C82, and C69–C95. V115 bears the Valine amide mark.

Belongs to the arthropod CHH/MIH/GIH/VIH hormone family. Produced by the medulla terminalis X-organ in the eyestalks and transported to the sinus gland where they are stored and released.

It localises to the secreted. In terms of biological role, hormone found in the sinus gland of isopods and decapods which controls the blood sugar level. Has a secretagogue action over the amylase released from the midgut gland. May act as a stress hormone and may be involved in the control of molting and reproduction. The protein is Crustacean hyperglycemic hormones 3 of Penaeus japonicus (Kuruma prawn).